Consider the following 177-residue polypeptide: Glia associated membrane protein glam-1 (177 aa).

3 consecutive transmembrane segments (helical) span residues 19-39, 42-62, and 76-96; these read PLVVGLAVFGAIRSFVQFWMS, FGMAGTHFCVLLLDLLLLFGA, and VTFACVLIAIIRFMIYPVVFA.

The protein resides in the membrane. This Caenorhabditis elegans protein is Glia associated membrane protein glam-1.